A 207-amino-acid chain; its full sequence is Large ribosomal subunit protein uL4 (207 aa).

The tract at residues 54–74 is disordered; sequence RSDVRGGGKKPYRQKGTGNAR.

The protein belongs to the universal ribosomal protein uL4 family. Part of the 50S ribosomal subunit.

In terms of biological role, one of the primary rRNA binding proteins, this protein initially binds near the 5'-end of the 23S rRNA. It is important during the early stages of 50S assembly. It makes multiple contacts with different domains of the 23S rRNA in the assembled 50S subunit and ribosome. Forms part of the polypeptide exit tunnel. The protein is Large ribosomal subunit protein uL4 of Magnetococcus marinus (strain ATCC BAA-1437 / JCM 17883 / MC-1).